A 684-amino-acid chain; its full sequence is Threonine--tRNA ligase (684 aa).

One can recognise a TGS domain in the interval 1–66 (MTAVASSAPA…DTDVEVTPVA (66 aa)). The catalytic stretch occupies residues 261–567 (DHRKLGVELD…LTEHYAGAFP (307 aa)). Residues C366, H417, and H544 each coordinate Zn(2+).

It belongs to the class-II aminoacyl-tRNA synthetase family. Homodimer. The cofactor is Zn(2+).

The protein resides in the cytoplasm. It carries out the reaction tRNA(Thr) + L-threonine + ATP = L-threonyl-tRNA(Thr) + AMP + diphosphate + H(+). Its function is as follows. Catalyzes the attachment of threonine to tRNA(Thr) in a two-step reaction: L-threonine is first activated by ATP to form Thr-AMP and then transferred to the acceptor end of tRNA(Thr). Also edits incorrectly charged L-seryl-tRNA(Thr). The polypeptide is Threonine--tRNA ligase (Mycolicibacterium smegmatis (strain ATCC 700084 / mc(2)155) (Mycobacterium smegmatis)).